The following is a 179-amino-acid chain: Phospholipase A2 (179 aa).

A signal peptide spans 1-21 (MHALRSSVLALWLCLHVSVRA). The propeptide occupies 22–39 (WMTYRSANGLDEYEPEDR). Residues Trp-47, Gly-49, and Gly-51 each contribute to the Ca(2+) site. 5 disulfides stabilise this stretch: Cys-48/Cys-70, Cys-69/Cys-109, Cys-76/Cys-102, Cys-100/Cys-133, and Cys-142/Cys-150. His-73 is an active-site residue. Asp-74 serves as a coordination point for Ca(2+). Asp-103 is an active-site residue. An N-linked (GlcNAc...) asparagine glycan is attached at Asn-112.

Ca(2+) serves as cofactor. Expressed by the venom gland.

It is found in the secreted. It catalyses the reaction a 1,2-diacyl-sn-glycero-3-phosphocholine + H2O = a 1-acyl-sn-glycero-3-phosphocholine + a fatty acid + H(+). PLA2 catalyzes the calcium-dependent hydrolysis of the 2-acyl groups in 3-sn-phosphoglycerides. In Xylocopa appendiculata circumvolans (Japanese carpenter bee), this protein is Phospholipase A2.